A 710-amino-acid polypeptide reads, in one-letter code: MDQQPERREGRSFPERKGQKRKLEEGAAAVEDREISAVSTDGGQALLSEVAAQVSVLNSAFSWQESDRAAAKRATQVLAELAKNEDLVNVIVDGGAVPALMTHLQAPPYNDGDLAEKPYEHEVEKGSAFALGLLAIKPEYQKLIVDKGALPHLVNLLKRNKDGSSSRAVNSVIRRAADAITNLAHENSSIKTRVRVEGGIPPLVELLEFSDSKVQRAAAGALRTLAFKNDDNKNQIVECNALPTLILMLGSEDAAIHYEAVGVIGNLVHSSPHIKKEVLTAGALQPVIGLLSSCCPESQREAALLLGQFASTDSDCKVHIVQRGAVRPLIEMLQSPDVQLKEMSAFALGRLAQDAHNQAGIAHSGGLGPLLKLLDSRNGSLQHNAAFALYGLADNEDNVSDFIRVGGIQKLQDGEFIVQATKDCVSKTLKRLEEKIHGRVLRHLLYLMRISEKSIQRRVALALAHLCSPEDQRTIFIDDNGLELLLGLLGSLNTKQQLDGAAALYKLANKSMALSPVDAAPPSPTQRVYLGEQYVNNATLSDVTFLVEGRTFYAHRICLLASSDAFRAMFDGGYREKDARDIEIPNIKWEVFELMMRFIYTGSVDITNEISKDLLRAADQYLLEGLKRLCEYTIAQDITLESIGDMYELSEAFHAMSLRQACIMFILEHFDKLSSMPWQNELVQRTIPEIREYFCRALTKSTTNLQSLRL.

The segment at 1-35 is disordered; that stretch reads MDQQPERREGRSFPERKGQKRKLEEGAAAVEDREI. 9 ARM repeats span residues 85–127, 138–185, 188–227, 230–269, 272–311, 314–353, 355–394, 429–468, and 470–509; these read EDLV…EKGS, PEYQ…NLAH, SSIK…TLAF, DDNK…NLVH, PHIK…QFAS, SDCK…RLAQ, AHNQ…GLAD, LKRL…HLCS, and EDQR…KLAN. The region spanning 541–608 is the BTB domain; it reads SDVTFLVEGR…IYTGSVDITN (68 aa).

Interacts with ABF2. Interacts with DUF7/AIP1. Detected in embryos and most of the vegetative and reproductive organs.

The protein localises to the nucleus. It functions in the pathway protein modification; protein ubiquitination. May act as a substrate-specific adapter of an E3 ubiquitin-protein ligase complex (CUL3-RBX1-BTB) which mediates the ubiquitination and subsequent proteasomal degradation of target proteins. Acts as a positive regulator of ABA response via the modulation of the transcriptional activity of ABF2, a transcription factor which controls ABA-dependent gene expression via the G-box-type ABA-responsive elements. Negative regulator of seed germination and young seedling growth. The protein is ARM REPEAT PROTEIN INTERACTING WITH ABF2 (ARIA) of Arabidopsis thaliana (Mouse-ear cress).